The primary structure comprises 901 residues: Nuclear factor of activated T-cells, cytoplasmic 4 (901 aa).

Over residues 1–11 (MGAASCEDEEL) the composition is skewed to acidic residues. 2 disordered regions span residues 1–180 (MGAA…SSWS) and 203–361 (NEAA…TEDS). A compositionally biased stretch (pro residues) spans 61–81 (IPRPPPPRPGMHSPPPRPAPS). Residues 96–109 (GGPGGTAGGTGGGR) show a composition bias toward gly residues. Positions 114–119 (PSIRIT) are calcineurin-binding. A compositionally biased stretch (low complexity) spans 114-123 (PSIRITSISP). Over residues 151 to 165 (GFGGYREAGGQGGGA) the composition is skewed to gly residues. Over residues 166 to 180 (FFSPSPGSSSLSSWS) the composition is skewed to low complexity. Ser-168, Ser-170, Ser-213, and Ser-217 each carry phosphoserine. The stretch at 213-229 (SPLPSPRASPRPWTPED) is one SP 1 repeat. The interval 213 to 293 (SPLPSPRASP…LSRRGSLGEE (81 aa)) is 2 approximate SP repeats. 2 stretches are compositionally biased toward pro residues: residues 215 to 227 (LPSPRASPRPWTP) and 254 to 263 (GPIPASPRPA). The Nuclear localization signal signature appears at 268–270 (KRR). The span at 272–288 (SSSGTPSSASPALSRRG) shows a compositional bias: low complexity. The stretch at 277-293 (PSSASPALSRRGSLGEE) is one SP 2; approximate repeat. 3 positions are modified to phosphoserine: Ser-289, Ser-334, and Ser-344. The 182-residue stretch at 401 to 582 (SALPPLDWPL…VPIECSQRSA (182 aa)) folds into the RHD domain. A DNA-binding region spans residues 430–437 (RAHYETEG). The IPT/TIG domain occupies 586-683 (PQVEAYSPSA…KRSPTQSFKF (98 aa)). Residues 672 to 674 (RRK) carry the Nuclear localization signal motif. Lys-689 participates in a covalent cross-link: Glycyl lysine isopeptide (Lys-Gly) (interchain with G-Cter in SUMO2). Disordered stretches follow at residues 697–721 (SLRGFPSTSGPPFGPDMDFSPPRPP) and 791–868 (QYGG…GFRD). Residues 805–822 (FSPPAPFRPPLPSSPPLE) are compositionally biased toward pro residues.

Member of the multicomponent NFATC transcription complex that consists of at least two components, a pre-existing cytoplasmic component NFATC2 and an inducible nuclear component NFATC1. Other NFAT proteins, such as NFATC4, NFATC3, or members of the activating protein-1 (AP-1) family and MAF can also bind the complex. NFAT proteins can bind DNA as monomers or dimers. Component of a promoter-binding complex composed of STAT3, NFATC3 and NFATC4; complex formation is enhanced by calcineurin. Interacts with CREBBP; this interaction potentiates transcription activation. Interacts with MAPK8/JNK1 and MAPK9/JNK2. Interacts with GATA4 (via the second Zn finger). Interacts (via N-terminus) with IRAK1 (via C-terminus). Interacts with RPS6KA3. Interacts with HOMER1, HOMER2 and HOMER3; this interaction competes with calcineurin/PPP3CA-binding and hence prevents NFATC4 dephosphorylation and activation. Interacts with ESR1 and ESR2; this interaction decreases NFATC4 transcriptional activity. Interacts with MTOR and MAPK7/ERK5. Interacts with TRIM17; this interaction prevents NFATC3 nuclear localization. Interacts with TCF25 (via C-terminus); the interaction leads to suppression of NFATC4 transcription factor activity and is reduced following stimulation with angiotensin-2. In terms of processing, phosphorylated by NFATC-kinases; dephosphorylated by calcineurin/PPP3CA. Phosphorylated on Ser-168 and Ser-170 by MTOR, IRAK1, MAPK7/ERK5 and MAPK14/p38, on Ser-213 and Ser-217 by MAPK8 and MAPK9, and on Ser-289 and Ser-344 by RPS6KA3. Phosphorylated by GSK3B; this phosphorylation markedly increases NFATC4 ubiquitination. Phosphorylation by MAPK8/JNK1, MAPK9/JNK2 and RPS6KA3 may stimulate NFATC4 transcriptional activity. Phosphorylation at Ser-168 and Ser-170 is stimulated by UV irradiation. Post-translationally, ubiquitinated, leading to degradation by the proteasome. Ubiquitination may be stimulated by GSK3B-dependent phosphorylation. Polyubiquitin linkage mainly occurs through 'Lys-48'. Expressed in heart (at protein level).

It localises to the cytoplasm. The protein localises to the nucleus. Ca(2+)-regulated transcription factor that is involved in several processes, including the development and function of the immune, cardiovascular, musculoskeletal, and nervous systems. Involved in T-cell activation, stimulating the transcription of cytokine genes, including that of IL2 and IL4. Along with NFATC3, involved in embryonic heart development. Following JAK/STAT signaling activation and as part of a complex with NFATC3 and STAT3, binds to the alpha-beta E4 promoter region of CRYAB and activates transcription in cardiomyocytes. Involved in mitochondrial energy metabolism required for cardiac morphogenesis and function. Transactivates many genes involved in heart physiology. Along with GATA4, binds to and activates NPPB/BNP promoter. Activates NPPA/ANP/ANF and MYH7/beta-MHC transcription. Binds to and transactivates AGTR2 gene promoter. Involved in the regulation of adult hippocampal neurogenesis. Involved in BDNF-driven pro-survival signaling in hippocampal adult-born neurons. Involved in the formation of long-term spatial memory and long-term potentiation. In cochlear nucleus neurons, may play a role in deafferentation-induced apoptosis during a developmental critical period when auditory neurons depend on afferent input for survival. Binds to and activates the BACE1/Beta-secretase 1 promoter, hence may regulate the proteolytic processing of the amyloid precursor protein (APP). Plays a role in adipocyte differentiation. May be involved in myoblast differentiation into myotubes. Binds the consensus DNA sequence 5'-GGAAAAT-3'. In the presence of CREBBP, activates TNF transcription. Binds to PPARG gene promoter and regulates its activity. Binds to PPARG and REG3G gene promoters. The chain is Nuclear factor of activated T-cells, cytoplasmic 4 (Nfatc4) from Rattus norvegicus (Rat).